The chain runs to 113 residues: ATP-dependent Clp protease adapter protein ClpS (113 aa).

The segment covering 1–11 (MHRDLHMMSDR) has biased composition (basic and acidic residues). The interval 1-25 (MHRDLHMMSDRSEDDGDTSILTATK) is disordered.

Belongs to the ClpS family. In terms of assembly, binds to the N-terminal domain of the chaperone ClpA.

Its function is as follows. Involved in the modulation of the specificity of the ClpAP-mediated ATP-dependent protein degradation. The sequence is that of ATP-dependent Clp protease adapter protein ClpS from Roseobacter denitrificans (strain ATCC 33942 / OCh 114) (Erythrobacter sp. (strain OCh 114)).